The following is a 276-amino-acid chain: Undecaprenyl-diphosphatase (276 aa).

A run of 6 helical transmembrane segments spans residues 43–63, 85–105, 109–129, 184–204, 218–238, and 254–274; these read RAMA…VWEF, INLL…ADLI, LFNP…MLWA, ATEF…VYSG, VFAI…KGLL, and IAFG…WTAA.

Belongs to the UppP family.

It is found in the cell inner membrane. The enzyme catalyses di-trans,octa-cis-undecaprenyl diphosphate + H2O = di-trans,octa-cis-undecaprenyl phosphate + phosphate + H(+). Catalyzes the dephosphorylation of undecaprenyl diphosphate (UPP). Confers resistance to bacitracin. This is Undecaprenyl-diphosphatase from Pseudomonas fluorescens (strain ATCC BAA-477 / NRRL B-23932 / Pf-5).